The primary structure comprises 224 residues: Biotin transport ATP-binding protein BioM (224 aa).

The ABC transporter domain occupies I3–A224. G34–T41 is an ATP binding site.

Belongs to the ABC transporter superfamily. As to quaternary structure, part of a biotin transporter complex composed of BioM, BioN and BioY.

It is found in the cell inner membrane. In terms of biological role, involved in biotin uptake. The polypeptide is Biotin transport ATP-binding protein BioM (bioM) (Rhizobium etli (strain ATCC 51251 / DSM 11541 / JCM 21823 / NBRC 15573 / CFN 42)).